Here is a 366-residue protein sequence, read N- to C-terminus: S-adenosylmethionine decarboxylase proenzyme 1 (366 aa).

Catalysis depends on residues Glu9 and Glu12. Substrate is bound at residue Glu68. The active-site Schiff-base intermediate with substrate; via pyruvic acid is Ser69. At Ser69 the chain carries Pyruvic acid (Ser); by autocatalysis. Catalysis depends on Cys83, which acts as the Proton donor; for catalytic activity. Active-site proton acceptor; for processing activity residues include Ser233 and His246. Glu250 is a binding site for substrate.

Belongs to the eukaryotic AdoMetDC family. It depends on pyruvate as a cofactor. Is synthesized initially as an inactive proenzyme. Formation of the active enzyme involves a self-maturation process in which the active site pyruvoyl group is generated from an internal serine residue via an autocatalytic post-translational modification. Two non-identical subunits are generated from the proenzyme in this reaction, and the pyruvate is formed at the N-terminus of the alpha chain, which is derived from the carboxyl end of the proenzyme. The post-translation cleavage follows an unusual pathway, termed non-hydrolytic serinolysis, in which the side chain hydroxyl group of the serine supplies its oxygen atom to form the C-terminus of the beta chain, while the remainder of the serine residue undergoes an oxidative deamination to produce ammonia and the pyruvoyl group blocking the N-terminus of the alpha chain.

It carries out the reaction S-adenosyl-L-methionine + H(+) = S-adenosyl 3-(methylsulfanyl)propylamine + CO2. Its pathway is amine and polyamine biosynthesis; S-adenosylmethioninamine biosynthesis; S-adenosylmethioninamine from S-adenosyl-L-methionine: step 1/1. In terms of biological role, essential for biosynthesis of the polyamines spermidine and spermine. Essential for polyamine homeostasis, and normal plant embryogenesis, growth and development. This Arabidopsis thaliana (Mouse-ear cress) protein is S-adenosylmethionine decarboxylase proenzyme 1.